A 2582-amino-acid chain; its full sequence is Chromodomain-helicase-DNA-binding protein 8 (2582 aa).

Disordered stretches follow at residues 22–111 (DDSF…PVLQ), 136–155 (MGVS…PSQS), 253–283 (VKGS…TQGE), and 349–377 (QKIQ…PLTL). Polar residues-rich tracts occupy residues 42–51 (SLDSLDQMNQ), 94–111 (DYTT…PVLQ), and 141–155 (TGVS…PSQS). A compositionally biased stretch (low complexity) spans 255 to 267 (GSAPAGNPGAAGP). Over residues 355-372 (PQPPSSQPQPQPQPPPSA) the composition is skewed to pro residues. The residue at position 434 (serine 434) is a Phosphoserine. Disordered stretches follow at residues 475–585 (RARG…VKRK) and 598–617 (DEEE…PILP). Residues 495–518 (RPEEEGEKKRRKKSSGERLKEEKP) are compositionally biased toward basic and acidic residues. A phosphoserine mark is found at serine 555 and serine 564. Positions 574 to 585 (QKRRSNRQVKRK) are enriched in basic residues. Lysine 611 is covalently cross-linked (Glycyl lysine isopeptide (Lys-Gly) (interchain with G-Cter in SUMO)). Chromo domains are found at residues 644–711 (AIVD…AQMR) and 726–792 (VEVD…RVNR). Positions 825-999 (LFNWYNRQNC…FSLLHFLEPS (175 aa)) constitute a Helicase ATP-binding domain. 838-845 (DEMGLGKT) contributes to the ATP binding site. Positions 950–953 (DEAH) match the DEAH box motif. Positions 1139 to 1290 (LIDKLLPKLK…KAVLQSMSGR (152 aa)) constitute a Helicase C-terminal domain. 2 positions are modified to phosphoserine: serine 1422 and serine 1426. The interval 1694–1715 (EDPEYKPLQGPPKDPDDEGDPL) is disordered. An interaction with FAM124B region spans residues 1791-2304 (IARREKQQRW…LVELEVECME (514 aa)). 2 positions are modified to phosphoserine: serine 1978 and serine 1980. The interval 1990 to 2019 (QCTSRTASPSPLRPDAPVEKSPEESTVQVP) is disordered. Threonine 1995 bears the Phosphothreonine mark. Phosphoserine occurs at positions 1997, 1999, and 2010. Lysine 2027 participates in a covalent cross-link: Glycyl lysine isopeptide (Lys-Gly) (interchain with G-Cter in SUMO2). Phosphoserine occurs at positions 2040, 2070, and 2072. Residues 2045–2120 (VRVGSSDTAP…RSRPKLYDEE (76 aa)) form a disordered region. Residues 2065–2074 (EDEDDSDSEL) show a composition bias toward acidic residues. Over residues 2077–2096 (SKLSPSSSSSSSSSSSSSST) the composition is skewed to low complexity. The segment covering 2104 to 2118 (EEKLTADRSRPKLYD) has biased composition (basic and acidic residues). Phosphoserine is present on residues serine 2184, serine 2202, and serine 2204. Positions 2187 to 2233 (VTAGGILGPGNHLLDSPSLTPGEDGDSPVPTPRSGSAASMAEEEASA) are disordered. A Phosphothreonine modification is found at threonine 2206. Position 2213 is a phosphoserine (serine 2213). Phosphothreonine is present on threonine 2217. The span at 2222 to 2233 (SAASMAEEEASA) shows a compositional bias: low complexity. Serine 2225 is modified (phosphoserine). Lysine 2258 participates in a covalent cross-link: Glycyl lysine isopeptide (Lys-Gly) (interchain with G-Cter in SUMO2). The tract at residues 2486-2582 (HVDSSTMLHH…NSDSSEDADD (97 aa)) is disordered. The span at 2493–2511 (LHHHHHHPHPHHHHHHHPG) shows a compositional bias: basic residues. Over residues 2514 to 2529 (TTGYPSSPATTTSGTA) the composition is skewed to low complexity. Serine 2520 is subject to Phosphoserine. The span at 2537–2551 (PEDDDEEEDEEDDDL) shows a compositional bias: acidic residues.

Belongs to the SNF2/RAD54 helicase family. CHD8 subfamily. Interacts with CTNNB1 and PIAS3. Component of some MLL1/MLL complex, at least composed of the core components KMT2A/MLL1, ASH2L, HCFC1/HCF1, WDR5 and RBBP5, as well as the facultative components BACC1, CHD8, E2F6, HSP70, INO80C, KANSL1, LAS1L, MAX, MCRS1, MGA, KAT8/MOF, PELP1, PHF20, PRP31, RING2, RUVB1/TIP49A, RUVB2/TIP49B, SENP3, TAF1, TAF4, TAF6, TAF7, TAF9 and TEX10. Interacts with CHD7. Interacts with FAM124B. Interacts with p53/TP53 and histone H1. Interacts with CTCF. Interacts with TLK2. Interacts with HNRNPL in an RNA-dependent manner. Post-translationally, sumoylated.

The protein localises to the nucleus. The enzyme catalyses ATP + H2O = ADP + phosphate + H(+). Functionally, ATP-dependent chromatin-remodeling factor, it slides nucleosomes along DNA; nucleosome sliding requires ATP. Acts as a transcription repressor by remodeling chromatin structure and recruiting histone H1 to target genes. Suppresses p53/TP53-mediated apoptosis by recruiting histone H1 and preventing p53/TP53 transactivation activity. Acts as a negative regulator of Wnt signaling pathway by regulating beta-catenin (CTNNB1) activity. Negatively regulates CTNNB1-targeted gene expression by being recruited specifically to the promoter regions of several CTNNB1 responsive genes. Involved in both enhancer blocking and epigenetic remodeling at chromatin boundary via its interaction with CTCF. Acts as a suppressor of STAT3 activity by suppressing the LIF-induced STAT3 transcriptional activity. Also acts as a transcription activator via its interaction with ZNF143 by participating in efficient U6 RNA polymerase III transcription. Regulates alternative splicing of a core group of genes involved in neuronal differentiation, cell cycle and DNA repair. Enables H3K36me3-coupled transcription elongation and co-transcriptional RNA processing likely via interaction with HNRNPL. The sequence is that of Chromodomain-helicase-DNA-binding protein 8 from Mus musculus (Mouse).